Here is a 939-residue protein sequence, read N- to C-terminus: Vacuolar membrane protease (939 aa).

Residues 1–11 are Cytoplasmic-facing; that stretch reads MGFNSIFKFRK. The chain crosses the membrane as a helical span at residues 12 to 32; sequence TSLSLLLFAVYFIIGILYFID. Topologically, residues 33–356 are vacuolar; the sequence is KTRYKHSLPI…TFVAIPSTKL (324 aa). 3 N-linked (GlcNAc...) asparagine glycosylation sites follow: Asn59, Asn88, and Asn114. Residues His149 and Asp161 each contribute to the Zn(2+) site. Glu193 acts as the Proton acceptor in catalysis. Zn(2+)-binding residues include Glu194, Glu219, and His293. An N-linked (GlcNAc...) asparagine glycan is attached at Asn326. The helical transmembrane segment at 357–377 threads the bilayer; that stretch reads FWINIALLIIMPIISIFLFSI. Over 378–388 the chain is Cytoplasmic; the sequence is VKKYNNEIIDS. The chain crosses the membrane as a helical span at residues 389–409; the sequence is GNIWWRLPISAMSSGTIIIFT. The Vacuolar segment spans residues 410 to 424; the sequence is TKLIMKWNPYILSRN. A helical transmembrane segment spans residues 425–445; that stretch reads FLLPLIGLTFEFIILNSYILT. Over 446–453 the chain is Cytoplasmic; it reads MFENLSSS. Residues 454–474 traverse the membrane as a helical segment; that stretch reads FDFKTIAINEISFLFWIVLAY. The Vacuolar segment spans residues 475-491; the sequence is QTWKLYDNNYQNTGIYP. The helical transmembrane segment at 492 to 512 threads the bilayer; that stretch reads FTICYIVMATAGNIGYLFLIF. Over 513 to 588 the chain is Cytoplasmic; it reads KNIEIVEDEE…NQRTILKESK (76 aa). Positions 540–552 are enriched in basic and acidic residues; sequence YRDEINGRDDSSR. Positions 540 to 561 are disordered; the sequence is YRDEINGRDDSSRDSNSASIPT. Residues 589–609 form a helical membrane-spanning segment; sequence LVYNYDWIIEFLLVVPFSTFL. At 610–636 the chain is on the vacuolar side; that stretch reads LYNSLELIMDAVNQTIQETGDLYKVYK. An N-linked (GlcNAc...) asparagine glycan is attached at Asn622. A helical transmembrane segment spans residues 637-657; that stretch reads ILAIGSILISIPTLPFAYKIG. The Cytoplasmic portion of the chain corresponds to 658–663; the sequence is CQLGKT. The chain crosses the membrane as a helical span at residues 664 to 684; it reads LTFISIGCLLISMALAPFTEM. Residues 685–939 lie on the Vacuolar side of the membrane; that stretch reads NPIKFRFMQV…LVKLTEAMVL (255 aa). Asn810 and Asn820 each carry an N-linked (GlcNAc...) asparagine glycan.

The protein belongs to the peptidase M28 family. Zn(2+) is required as a cofactor.

The protein localises to the vacuole membrane. May be involved in vacuolar sorting and osmoregulation. This Vanderwaltozyma polyspora (strain ATCC 22028 / DSM 70294 / BCRC 21397 / CBS 2163 / NBRC 10782 / NRRL Y-8283 / UCD 57-17) (Kluyveromyces polysporus) protein is Vacuolar membrane protease.